A 544-amino-acid polypeptide reads, in one-letter code: Chaperonin GroEL (544 aa).

ATP is bound by residues 29 to 32, lysine 50, 86 to 90, glycine 414, 477 to 479, and aspartate 493; these read TMGP, DGTTT, and NAV.

The protein belongs to the chaperonin (HSP60) family. In terms of assembly, forms a cylinder of 14 subunits composed of two heptameric rings stacked back-to-back. Interacts with the co-chaperonin GroES.

The protein resides in the cytoplasm. It carries out the reaction ATP + H2O + a folded polypeptide = ADP + phosphate + an unfolded polypeptide.. Its function is as follows. Together with its co-chaperonin GroES, plays an essential role in assisting protein folding. The GroEL-GroES system forms a nano-cage that allows encapsulation of the non-native substrate proteins and provides a physical environment optimized to promote and accelerate protein folding. In Campylobacter curvus (strain 525.92), this protein is Chaperonin GroEL.